A 582-amino-acid polypeptide reads, in one-letter code: Phosphoglucomutase, cytoplasmic (582 aa).

2 residues coordinate alpha-D-glucose 1,6-bisphosphate: R25 and S124. The active-site Phosphoserine intermediate is S124. Mg(2+) contacts are provided by S124, D299, D301, and D303. S124 is modified (phosphoserine). Positions 303, 304, 367, 386, 388, and 399 each coordinate alpha-D-glucose 1,6-bisphosphate.

The protein belongs to the phosphohexose mutase family. In terms of assembly, monomer. Mg(2+) serves as cofactor.

Its subcellular location is the cytoplasm. The catalysed reaction is alpha-D-glucose 1-phosphate = alpha-D-glucose 6-phosphate. It carries out the reaction O-phospho-L-seryl-[protein] + alpha-D-glucose 1-phosphate = alpha-D-glucose 1,6-bisphosphate + L-seryl-[protein]. The enzyme catalyses alpha-D-glucose 1,6-bisphosphate + L-seryl-[protein] = O-phospho-L-seryl-[protein] + alpha-D-glucose 6-phosphate. Catalyzes the reversible isomerization of alpha-D-glucose 1-phosphate to alpha-D-glucose 6-phosphate. The mechanism proceeds via the intermediate compound alpha-D-glucose 1,6-bisphosphate. This enzyme participates in both the breakdown and synthesis of glucose. This chain is Phosphoglucomutase, cytoplasmic (PGM1), found in Populus tremula (European aspen).